The following is a 179-amino-acid chain: Iron sulfur cluster assembly protein 1, mitochondrial (179 aa).

The disordered stretch occupies residues 160 to 179 (RSVKQPTLGPEAAQAETIAT).

It belongs to the NifU family. In terms of assembly, component of the core Fe-S cluster (ISC) assembly machinery. The cofactor is [2Fe-2S] cluster.

Its subcellular location is the mitochondrion matrix. The protein operates within cofactor biosynthesis; iron-sulfur cluster biosynthesis. Scaffold protein for the de novo synthesis of iron-sulfur (Fe-S) clusters within mitochondria, which is required for maturation of both mitochondrial and cytoplasmic [2Fe-2S] and [4Fe-4S] proteins. First, a [2Fe-2S] cluster is transiently assembled on the scaffold protein ISU1. In a second step, the cluster is released from ISU1, transferred to a glutaredoxin, followed by the formation of mitochondrial [2Fe-2S] proteins, the synthesis of [4Fe-4S] clusters and their target-specific insertion into the recipient apoproteins. Cluster assembly on ISU1 depends on the function of the cysteine desulfurase complex NFS1-ISD11, which serves as the sulfur donor for cluster synthesis, the iron-binding protein frataxin as the putative iron donor, and the electron transfer chain comprised of ferredoxin reductase and ferredoxin, which receive their electrons from NADH. The protein is Iron sulfur cluster assembly protein 1, mitochondrial (ISU1) of Debaryomyces hansenii (strain ATCC 36239 / CBS 767 / BCRC 21394 / JCM 1990 / NBRC 0083 / IGC 2968) (Yeast).